The chain runs to 993 residues: Desmoglein-3 (993 aa).

The N-terminal stretch at 1-23 (MTCLFPRALGSLALLMVVLLVQG) is a signal peptide. Positions 24–49 (ELHVKPGGQHREDGTALQLAKRRYKR) are excised as a propeptide. Cadherin domains lie at 50 to 157 (EWVK…PPIF), 158 to 267 (SQTI…FPVL), 268 to 388 (RESQ…PPSK), and 384 to 495 (RPPS…CPSV). Residues 50 to 617 (EWVKFAKPCR…YGESSWRLGP (568 aa)) are Extracellular-facing. N110 and N180 each carry an N-linked (GlcNAc...) asparagine glycan. N-linked (GlcNAc...) asparagine glycans are attached at residues N459 and N546. The helical transmembrane segment at 618–638 (AAIGLILLGLLMLLLAPLLLL) threads the bilayer. Topologically, residues 639 to 993 (TCDCGSGPIG…LYTKETCSHL (355 aa)) are cytoplasmic. The segment at 641–714 (DCGSGPIGGA…NTYAGGTMVE (74 aa)) is required for interaction with CTNND1 and localization at cell-cell junctions. Residues 845–876 (AKQAKPGPKDSGSGADTCARSMEVPQSGSNRY) are disordered. Desmoglein repeat repeat units follow at residues 905 to 930 (MSTS…LLTE) and 931 to 961 (TYST…ERVI).

Homodimer. Part of a complex that contains DSG3, PKP1, YAP1 and YWHAG; the complex is required for localization of DSG3 and YAP1 to the cell membrane in keratinocytes. Interacts with PKP2. Interacts with CTNND1; the interaction facilitates DSG3 localization and retention at cell-cell junctions. Interacts with CDH1; the interaction is required for CDH1 localization to developing adherens junctions. Interacts with RAC1; the interaction is required for DSG3 translocation to cell-cell junctions, organization of cortical F-actin bundles and actin anchoring at cell-cell junctions. Interacts with DSC3; the interaction may limit the interaction of DSC3 with p38MAPK family members and therefore repress p38MAPK signaling activation. As to expression, expressed in the basal layer of the outer root sheath of the telogen hair club, specifically at the cell membrane between the apex of the cells and the surrounding hair club (at protein level). Expression is less abundant between the lateral margins of the outer root sheath basal cells (at protein level). Expressed in epidermis. Expressed in the epithelium of the tongue.

It localises to the cell membrane. Its subcellular location is the cell junction. It is found in the desmosome. The protein localises to the cytoplasm. The protein resides in the tight junction. In terms of biological role, a component of desmosome cell-cell junctions which are required for positive regulation of cellular adhesion. Required for adherens and desmosome junction assembly in response to mechanical force in keratinocytes. Required for desmosome-mediated cell-cell adhesion of cells surrounding the telogen hair club and the basal layer of the outer root sheath epithelium, consequently is essential for the anchoring of telogen hairs in the hair follicle. Required for the maintenance of the epithelial barrier via promoting desmosome-mediated intercellular attachment of suprabasal epithelium to basal cells. May play a role in the protein stability of the desmosome plaque components DSP, JUP, PKP1, PKP2 and PKP3. Required for YAP1 localization at the plasma membrane in keratinocytes in response to mechanical strain, via the formation of an interaction complex composed of DSG3, PKP1 and YWHAG. May also be involved in the positive regulation of YAP1 target gene transcription and as a result cell proliferation. Positively regulates cellular contractility and cell junction formation via organization of cortical F-actin bundles and anchoring of actin to tight junctions, in conjunction with RAC1. The cytoplasmic pool of DSG3 is required for the localization of CDH1 and CTNNB1 at developing adherens junctions, potentially via modulation of SRC activity. Inhibits keratinocyte migration via suppression of p38MAPK signaling, may therefore play a role in moderating wound healing. In Mus musculus (Mouse), this protein is Desmoglein-3 (Dsg3).